The sequence spans 208 residues: Thymidylate kinase (208 aa).

10–17 (GIDGCGKT) contributes to the ATP binding site.

This sequence belongs to the thymidylate kinase family.

The catalysed reaction is dTMP + ATP = dTDP + ADP. Phosphorylation of dTMP to form dTDP in both de novo and salvage pathways of dTTP synthesis. The sequence is that of Thymidylate kinase from Caldanaerobacter subterraneus subsp. tengcongensis (strain DSM 15242 / JCM 11007 / NBRC 100824 / MB4) (Thermoanaerobacter tengcongensis).